We begin with the raw amino-acid sequence, 243 residues long: Peptidyl-tRNA hydrolase (243 aa).

Tyr-14 contributes to the tRNA binding site. The active-site Proton acceptor is the His-19. TRNA is bound by residues Tyr-64, Asn-66, and Asn-112. Residues 190-207 (KAEEEKPRKEGKDGEKKP) are compositionally biased toward basic and acidic residues. Residues 190-243 (KAEEEKPRKEGKDGEKKPAGQSHIRQARSSNQPKLPATGPMAEMLKKMFGNKGE) form a disordered region. The segment covering 212–222 (HIRQARSSNQP) has biased composition (polar residues).

Belongs to the PTH family. As to quaternary structure, monomer.

The protein resides in the cytoplasm. The catalysed reaction is an N-acyl-L-alpha-aminoacyl-tRNA + H2O = an N-acyl-L-amino acid + a tRNA + H(+). Functionally, hydrolyzes ribosome-free peptidyl-tRNAs (with 1 or more amino acids incorporated), which drop off the ribosome during protein synthesis, or as a result of ribosome stalling. In terms of biological role, catalyzes the release of premature peptidyl moieties from peptidyl-tRNA molecules trapped in stalled 50S ribosomal subunits, and thus maintains levels of free tRNAs and 50S ribosomes. The chain is Peptidyl-tRNA hydrolase from Rhizobium etli (strain CIAT 652).